The sequence spans 327 residues: Dipeptide transport ATP-binding protein DppF (327 aa).

The ABC transporter domain occupies 12–261; the sequence is LNAIGLKKYY…PQHPYTKALL (250 aa). 54–61 serves as a coordination point for ATP; it reads GESGCGKS.

The protein belongs to the ABC transporter superfamily.

Its subcellular location is the cell inner membrane. The catalysed reaction is a dipeptide(out) + ATP + H2O = a dipeptide(in) + ADP + phosphate + H(+). Functionally, part of the ABC transporter DppBCDF involved in dipeptide transport. Responsible for energy coupling to the transport system. This Haemophilus influenzae (strain ATCC 51907 / DSM 11121 / KW20 / Rd) protein is Dipeptide transport ATP-binding protein DppF (dppF).